The chain runs to 156 residues: Putative pre-16S rRNA nuclease (156 aa).

Belongs to the YqgF nuclease family.

It is found in the cytoplasm. Could be a nuclease involved in processing of the 5'-end of pre-16S rRNA. This chain is Putative pre-16S rRNA nuclease, found in Phenylobacterium zucineum (strain HLK1).